The chain runs to 316 residues: GTP cyclohydrolase FolE2 2 (316 aa).

It belongs to the GTP cyclohydrolase IV family.

The catalysed reaction is GTP + H2O = 7,8-dihydroneopterin 3'-triphosphate + formate + H(+). It functions in the pathway cofactor biosynthesis; 7,8-dihydroneopterin triphosphate biosynthesis; 7,8-dihydroneopterin triphosphate from GTP: step 1/1. Converts GTP to 7,8-dihydroneopterin triphosphate. The polypeptide is GTP cyclohydrolase FolE2 2 (Burkholderia orbicola (strain MC0-3)).